The primary structure comprises 542 residues: Chloride channel CLIC-like protein 1 (542 aa).

A signal peptide spans 1-18 (MLYSLLLCECLWLITAYA). Topologically, residues 19 to 184 (HDDEWIDPTD…EEFFGVDPYN (166 aa)) are lumenal. A helical transmembrane segment spans residues 185-205 (VFMVLLCLLCIVALVATELWT). Residues 206–216 (YVRWYTQLKRV) lie on the Cytoplasmic side of the membrane. A helical transmembrane segment spans residues 217–237 (FFISFLISLGWNWMYLYKLAF). Over 238–329 (AQHQAEVAKM…GEFIKALMKE (92 aa)) the chain is Lumenal. The chain crosses the membrane as a helical span at residues 330-350 (IPVLLHIPVLIIMALAVLSFC). Residues 351-542 (YGAGKSVNML…PASTAVEVCG (192 aa)) are Cytoplasmic-facing. The segment at 369–394 (EAPQALQAGERRRQQKIDYRPHGGAG) is disordered. A compositionally biased stretch (basic and acidic residues) spans 377 to 389 (GERRRQQKIDYRP). 2 positions are modified to phosphoserine: Ser-438 and Ser-464. Residues 452-542 (AREHPKVVPG…PASTAVEVCG (91 aa)) are disordered. Low complexity predominate over residues 480–491 (ESTPTESSTESS). Position 482 is a phosphothreonine (Thr-482). A Phosphoserine modification is found at Ser-532.

The protein belongs to the chloride channel MCLC family. In terms of assembly, homomultimers. Interacts with mitochondrial protein PIGBOS1 (via C-terminus); the interaction occurs at the mitochondria-associated endoplasmic reticulum (ER) membrane, a zone of contact between the ER and mitochondrial membranes, but does not appear to play a role in ER-mitochondria tethering and is not affected by ER stress. Interacts with CALR.

It localises to the endoplasmic reticulum membrane. It carries out the reaction chloride(in) = chloride(out). The catalysed reaction is bromide(in) = bromide(out). It catalyses the reaction nitrate(in) = nitrate(out). The enzyme catalyses fluoride(in) = fluoride(out). Anion-selective channel with Ca(2+)-dependent and voltage-independent gating. Permeable to small monovalent anions with selectivity for bromide &gt; chloride &gt; nitrate &gt; fluoride. Operates in the endoplasmic reticulum (ER) membrane where it mediates chloride efflux to compensate for the loss of positive charges from the ER lumen upon Ca(2+) release. Contributes to the maintenance of ER Ca(2+) pools and activation of unfolded protein response to prevent accumulation of misfolded proteins in the ER lumen. Particularly involved in ER homeostasis mechanisms underlying motor neurons and retinal photoreceptors survival. The polypeptide is Chloride channel CLIC-like protein 1 (CLCC1) (Bos taurus (Bovine)).